Here is a 414-residue protein sequence, read N- to C-terminus: MEFVKDLKTPEDYINNELKYGAHNYDPIPVVLKRAKGVFVYDVNDKRYYDFLSAYSSVNQGHCHPNILNAMINQAKNLTICSRAFFSVPLGICERYLTNLLGYDKVLMMNTGAEANETAYKLCRKWGYEVKKIPENMAKIVVCKNNFSGRTLGCISASTTKKCTSNFGPFAPQFSKVPYDDLEALEEELKDPNVCAFIVEPIQGEAGVIVPSDNYLQGVYDICKKYNVLFVADEVQTGLGRTGKLLCVHHYNVKPDVILLGKALSGGHYPISAVLANDDIMLVIKPGEHGSTYGGNPLAASICVEALNVLINEKLCENAEKLGGPFLENLKRELKDSKIVRDVRGKGLLCAIEFKNELVNVLDICLKLKENGLITRDVHDKTIRLTPPLCITKEQLDECTEIIVKTVKFFDERF.

The cysteines at positions 154 and 163 are disulfide-linked. At Lys-262 the chain carries N6-(pyridoxal phosphate)lysine.

Belongs to the class-III pyridoxal-phosphate-dependent aminotransferase family. Homodimer. Requires pyridoxal 5'-phosphate as cofactor. In terms of processing, the disulfide bond between Cys-154 and Cys-163 is reduced by TRX1 which increases OAT catalytic activity.

It localises to the cytoplasm. It catalyses the reaction a 2-oxocarboxylate + L-ornithine = L-glutamate 5-semialdehyde + an L-alpha-amino acid. The catalysed reaction is L-ornithine + 2-oxoglutarate = L-glutamate 5-semialdehyde + L-glutamate. It participates in amino-acid biosynthesis; L-proline biosynthesis; L-glutamate 5-semialdehyde from L-ornithine: step 1/1. Unlike for mammalian OATs, activity is increased by TRX1-mediated reduction of the disulfide bond between Cys-154 and Cys-163. Binding to TRX1 may also induce conformational changes that facilitate substrate binding. Catalyzes the transamination of alpha-ketoglutarate with ornithine or N-acetylornithine and of glutamate-5-semialdehyde with glutamate and alanine. The polypeptide is Ornithine aminotransferase (Plasmodium yoelii yoelii).